We begin with the raw amino-acid sequence, 190 residues long: Dynactin subunit 6 (190 aa).

Thr-186 carries the post-translational modification Phosphothreonine; by CDK1.

The protein belongs to the dynactin subunits 5/6 family. Dynactin subunit 6 subfamily. In terms of assembly, subunit of dynactin, a multiprotein complex part of a tripartite complex with dynein and a adapter, such as BICDL1, BICD2 or HOOK3. The dynactin complex is built around ACTR1A/ACTB filament and consists of an actin-related filament composed of a shoulder domain, a pointed end and a barbed end. Its length is defined by its flexible shoulder domain. The soulder is composed of 2 DCTN1 subunits, 4 DCTN2 and 2 DCTN3. The 4 DCNT2 (via N-terminus) bind the ACTR1A filament and act as molecular rulers to determine the length. The pointed end is important for binding dynein-dynactin cargo adapters. Consists of 4 subunits: ACTR10, DCNT4, DCTN5 and DCTN6. Within the complex DCTN6 forms a heterodimer with DCTN5. The barbed end is composed of a CAPZA1:CAPZB heterodimers, which binds ACTR1A/ACTB filament and dynactin and stabilizes dynactin. Interacts with PLK1. Interacts with N4BP2L1. In terms of processing, phosphorylation at Thr-186 by CDK1 during mitotic prometaphase creates a binding site for PLK1 that facilitates its recruitment to kinetochores.

It localises to the cytoplasm. The protein localises to the cytoskeleton. Its subcellular location is the chromosome. It is found in the centromere. The protein resides in the kinetochore. Part of the dynactin complex that activates the molecular motor dynein for ultra-processive transport along microtubules. The protein is Dynactin subunit 6 (DCTN6) of Bos taurus (Bovine).